We begin with the raw amino-acid sequence, 884 residues long: uncharacterized protein (884 aa).

This is an uncharacterized protein from Mycobacterium tuberculosis (strain ATCC 25618 / H37Rv).